We begin with the raw amino-acid sequence, 190 residues long: Endo-1,4-beta-xylanase (190 aa).

One can recognise a GH11 domain in the interval 1–190 (QTIGPGTGYS…SSGSASITVS (190 aa)). The active-site Nucleophile is Glu86. The active-site Proton donor is the Glu177.

This sequence belongs to the glycosyl hydrolase 11 (cellulase G) family.

The enzyme catalyses Endohydrolysis of (1-&gt;4)-beta-D-xylosidic linkages in xylans.. Its pathway is glycan degradation; xylan degradation. This is Endo-1,4-beta-xylanase from Trichoderma harzianum (Hypocrea lixii).